Reading from the N-terminus, the 133-residue chain is Large-conductance mechanosensitive channel (133 aa).

A run of 2 helical transmembrane segments spans residues 14–34 (VVDL…VSSL) and 67–87 (GNFI…FMFV).

Belongs to the MscL family. As to quaternary structure, homopentamer.

Its subcellular location is the cell membrane. Its function is as follows. Channel that opens in response to stretch forces in the membrane lipid bilayer. May participate in the regulation of osmotic pressure changes within the cell. This is Large-conductance mechanosensitive channel from Bacillus cereus (strain AH187).